We begin with the raw amino-acid sequence, 104 residues long: Large ribosomal subunit protein uL24 (104 aa).

It belongs to the universal ribosomal protein uL24 family. As to quaternary structure, part of the 50S ribosomal subunit.

Functionally, one of two assembly initiator proteins, it binds directly to the 5'-end of the 23S rRNA, where it nucleates assembly of the 50S subunit. One of the proteins that surrounds the polypeptide exit tunnel on the outside of the subunit. This chain is Large ribosomal subunit protein uL24, found in Shewanella loihica (strain ATCC BAA-1088 / PV-4).